The chain runs to 99 residues: MRAPEEVIIRPIITEKTNRLMEDLNKYVFEVHKDANKHEIKHAVEKLFGVKVKAVNTLYARPRVKRTITRRGRVYGATRGYKKAIITLDKNSKIDFMSL.

This sequence belongs to the universal ribosomal protein uL23 family. In terms of assembly, part of the 50S ribosomal subunit. Contacts protein L29, and trigger factor when it is bound to the ribosome.

One of the early assembly proteins it binds 23S rRNA. One of the proteins that surrounds the polypeptide exit tunnel on the outside of the ribosome. Forms the main docking site for trigger factor binding to the ribosome. The protein is Large ribosomal subunit protein uL23 of Hydrogenobaculum sp. (strain Y04AAS1).